Here is a 38-residue protein sequence, read N- to C-terminus: Large ribosomal subunit protein bL36 (38 aa).

Belongs to the bacterial ribosomal protein bL36 family.

The sequence is that of Large ribosomal subunit protein bL36 from Chloroflexus aurantiacus (strain ATCC 29366 / DSM 635 / J-10-fl).